A 201-amino-acid chain; its full sequence is Mediator of RNA polymerase II transcription subunit 22 (201 aa).

The stretch at 93 to 123 forms a coiled coil; the sequence is SVNESINQRNQQLRTLREECDKKLIALRDDI. The tract at residues 182 to 201 is disordered; it reads SQIHTPPHLNGHGAGMTEHT.

It belongs to the Mediator complex subunit 22 family. As to quaternary structure, component of the Mediator complex.

The protein localises to the nucleus. Its function is as follows. Component of the Mediator complex, a coactivator involved in the regulated transcription of nearly all RNA polymerase II-dependent genes. Mediator functions as a bridge to convey information from gene-specific regulatory proteins to the basal RNA polymerase II transcription machinery. Mediator is recruited to promoters by direct interactions with regulatory proteins and serves as a scaffold for the assembly of a functional preinitiation complex with RNA polymerase II and the general transcription factors. The chain is Mediator of RNA polymerase II transcription subunit 22 (med22) from Xenopus laevis (African clawed frog).